We begin with the raw amino-acid sequence, 222 residues long: Small ribosomal subunit protein uS3 (222 aa).

One can recognise a KH type-2 domain in the interval 38–106 (IRKFISEKLA…NVHINIVEIK (69 aa)).

The protein belongs to the universal ribosomal protein uS3 family. In terms of assembly, part of the 30S ribosomal subunit. Forms a tight complex with proteins S10 and S14.

Binds the lower part of the 30S subunit head. Binds mRNA in the 70S ribosome, positioning it for translation. This Lactobacillus johnsonii (strain CNCM I-12250 / La1 / NCC 533) protein is Small ribosomal subunit protein uS3.